The following is an 87-amino-acid chain: Translation initiation factor IF-1 1 (87 aa).

The region spanning 1–72 (MAKEELLELD…TKGRINFRHK (72 aa)) is the S1-like domain. Residues 68–87 (NFRHKDANSPRPPRTGQPRR) form a disordered region. Pro residues predominate over residues 77-87 (PRPPRTGQPRR).

The protein belongs to the IF-1 family. In terms of assembly, component of the 30S ribosomal translation pre-initiation complex which assembles on the 30S ribosome in the order IF-2 and IF-3, IF-1 and N-formylmethionyl-tRNA(fMet); mRNA recruitment can occur at any time during PIC assembly.

The protein resides in the cytoplasm. One of the essential components for the initiation of protein synthesis. Stabilizes the binding of IF-2 and IF-3 on the 30S subunit to which N-formylmethionyl-tRNA(fMet) subsequently binds. Helps modulate mRNA selection, yielding the 30S pre-initiation complex (PIC). Upon addition of the 50S ribosomal subunit IF-1, IF-2 and IF-3 are released leaving the mature 70S translation initiation complex. The chain is Translation initiation factor IF-1 1 from Burkholderia lata (strain ATCC 17760 / DSM 23089 / LMG 22485 / NCIMB 9086 / R18194 / 383).